We begin with the raw amino-acid sequence, 181 residues long: RNA-binding protein (181 aa).

Positions 106–181 are disordered; that stretch reads FLTSVNPGES…DANTRKSKRK (76 aa). Residues 141–157 are compositionally biased toward basic residues; it reads RNSKKGAKKSSSARKKK. A compositionally biased stretch (low complexity) spans 160–172; it reads SSNSETDLSSDSD.

The protein belongs to the phytoreovirus RNA-binding protein family.

It is found in the host cytoplasm. In terms of biological role, constituent of viral factories. Binds to ssRNA and dsRNA. The polypeptide is RNA-binding protein (Rice dwarf virus (isolate Akita) (RDV)).